A 259-amino-acid chain; its full sequence is UPF0246 protein PSHAa2558 (259 aa).

The protein belongs to the UPF0246 family.

The sequence is that of UPF0246 protein PSHAa2558 from Pseudoalteromonas translucida (strain TAC 125).